A 133-amino-acid chain; its full sequence is Small ribosomal subunit protein uS8 (133 aa).

It belongs to the universal ribosomal protein uS8 family. Part of the 30S ribosomal subunit. Contacts proteins S5 and S12.

One of the primary rRNA binding proteins, it binds directly to 16S rRNA central domain where it helps coordinate assembly of the platform of the 30S subunit. This chain is Small ribosomal subunit protein uS8, found in Chlamydia abortus (strain DSM 27085 / S26/3) (Chlamydophila abortus).